A 172-amino-acid polypeptide reads, in one-letter code: Probable phosphatase YqeG (172 aa).

Its function is as follows. Has low dephosphorylation activity on GMP and glucose-6-phosphate. This Bacillus subtilis (strain 168) protein is Probable phosphatase YqeG (yqeG).